We begin with the raw amino-acid sequence, 177 residues long: Large ribosomal subunit protein uL6 (177 aa).

Belongs to the universal ribosomal protein uL6 family. Part of the 50S ribosomal subunit.

Its function is as follows. This protein binds to the 23S rRNA, and is important in its secondary structure. It is located near the subunit interface in the base of the L7/L12 stalk, and near the tRNA binding site of the peptidyltransferase center. This is Large ribosomal subunit protein uL6 from Latilactobacillus sakei subsp. sakei (strain 23K) (Lactobacillus sakei subsp. sakei).